The primary structure comprises 357 residues: Palmitoyltransferase ZDHHC20-A (357 aa).

The Cytoplasmic segment spans residues M1–L14. Residues S15–V35 form a helical membrane-spanning segment. The Lumenal portion of the chain corresponds to E36–I50. A helical transmembrane segment spans residues Y51–S71. Residues S72 to K166 are Cytoplasmic-facing. Positions R123–A173 constitute a DHHC domain. The S-palmitoyl cysteine intermediate role is filled by C153. A helical transmembrane segment spans residues F167–L187. Topologically, residues Q188–K204 are lumenal. Residues F205 to H228 traverse the membrane as a helical segment. Topologically, residues L229–S357 are cytoplasmic.

It belongs to the DHHC palmitoyltransferase family.

The protein localises to the golgi apparatus membrane. The protein resides in the cell membrane. It is found in the cytoplasm. It localises to the perinuclear region. Its subcellular location is the endoplasmic reticulum membrane. The protein localises to the endoplasmic reticulum-Golgi intermediate compartment membrane. It catalyses the reaction L-cysteinyl-[protein] + hexadecanoyl-CoA = S-hexadecanoyl-L-cysteinyl-[protein] + CoA. The enzyme catalyses L-cysteinyl-[protein] + tetradecanoyl-CoA = S-tetradecanoyl-L-cysteinyl-[protein] + CoA. It carries out the reaction L-cysteinyl-[protein] + octadecanoyl-CoA = S-octadecanoyl-L-cysteinyl-[protein] + CoA. Palmitoyltransferase that could catalyze the addition of palmitate onto various protein substrates. Catalyzes palmitoylation of Cys residues on protein substrates and has a preference for acyl-CoA with C16 fatty acid chains but may also utilize acyl-CoA with C14 and C18 fatty acid chains. This Danio rerio (Zebrafish) protein is Palmitoyltransferase ZDHHC20-A.